We begin with the raw amino-acid sequence, 127 residues long: UPF0325 protein ASA_3165 (127 aa).

The protein belongs to the UPF0325 family.

The protein is UPF0325 protein ASA_3165 of Aeromonas salmonicida (strain A449).